The chain runs to 142 residues: UPF0306 protein Ent638_3591 (142 aa).

This sequence belongs to the UPF0306 family.

The chain is UPF0306 protein Ent638_3591 from Enterobacter sp. (strain 638).